The following is a 300-amino-acid chain: uncharacterized protein (300 aa).

This is an uncharacterized protein from Methanocaldococcus jannaschii (strain ATCC 43067 / DSM 2661 / JAL-1 / JCM 10045 / NBRC 100440) (Methanococcus jannaschii).